The primary structure comprises 359 residues: Probable RNA methyltransferase RPD_2859 (359 aa).

Glu-99 serves as the catalytic Proton acceptor. One can recognise a Radical SAM core domain in the interval 105-330; that stretch reads RFDGHTACIS…PVVVRDTQGR (226 aa). Cys-112 and Cys-336 are oxidised to a cystine. Residues Cys-119, Cys-123, and Cys-126 each coordinate [4Fe-4S] cluster. S-adenosyl-L-methionine-binding positions include 162 to 163, Ser-194, 217 to 219, and Asn-293; these read GE and SLH. Cys-336 acts as the S-methylcysteine intermediate in catalysis.

It belongs to the radical SAM superfamily. RlmN family. Requires [4Fe-4S] cluster as cofactor.

It localises to the cytoplasm. This is Probable RNA methyltransferase RPD_2859 from Rhodopseudomonas palustris (strain BisB5).